We begin with the raw amino-acid sequence, 282 residues long: Virginiamycin B lyase (282 aa).

Histidine 217 is a substrate binding site. Glutamate 256 contributes to the Mg(2+) binding site. Histidine 258 (proton acceptor) is an active-site residue. Glutamate 273 is a Mg(2+) binding site.

Belongs to the Vgb family. In terms of assembly, monomer. It depends on Mg(2+) as a cofactor.

Its function is as follows. Inactivates the type B streptogramin antibiotics by linearizing the lactone ring at the ester linkage, generating a free phenylglycine carboxylate and converting the threonyl moiety into 2-amino-butenoic acid. This chain is Virginiamycin B lyase, found in Mycolicibacterium smegmatis (strain ATCC 700084 / mc(2)155) (Mycobacterium smegmatis).